A 1337-amino-acid chain; its full sequence is Activated Cdc42 kinase-like (1337 aa).

The residue at position 71 (S71) is a Phosphoserine. One can recognise a Protein kinase domain in the interval 133-399 (ISVNKQLGTG…GEIYDQLPDM (267 aa)). Residues 139–147 (LGTGEFGIV) and K164 each bind ATP. D260 acts as the Proton acceptor in catalysis. Y291 and Y292 each carry phosphotyrosine. In terms of domain architecture, SH3 spans 399–460 (MKPEQLKAVV…NPSNTVAFLE (62 aa)). The CRIB domain maps to 488–502 (ISKPQNDFKHTGHVG). Positions 714–739 (SGDTNGNKHGHGLLPTLSKKKSSGTV) are disordered. S764 and S778 each carry phosphoserine. Residues 786-822 (RFPHLSNNGSGDKSGGLGTSGSAHTPTHGNASPFPKK) are disordered. The segment covering 805 to 815 (SGSAHTPTHGN) has biased composition (polar residues). S831, S918, and S924 each carry phosphoserine. Disordered stretches follow at residues 906–969 (AGLS…TSTK) and 1024–1045 (PSGMRRPSRPSEREYENMPTVG). The segment covering 947–957 (PESPNPIPLPP) has biased composition (pro residues).

Belongs to the protein kinase superfamily. Tyr protein kinase family.

The enzyme catalyses L-tyrosyl-[protein] + ATP = O-phospho-L-tyrosyl-[protein] + ADP + H(+). Its function is as follows. Likely to act as a downstream effector of Cdc42 during dorsal closure, acting in a kinase independent manner with the other ACK family member Ack to positively regulate expression of the myosin zip by promoting the endocytosis of Egfr in the amnioserosa (AS). The sequence is that of Activated Cdc42 kinase-like from Drosophila melanogaster (Fruit fly).